The following is a 372-amino-acid chain: Chaperone protein DnaJ (372 aa).

A J domain is found at 5–69; the sequence is DYYEVLGLSK…QKKAQYDQFG (65 aa). The CR-type zinc finger occupies 129–211; that stretch reads GAEKEISVKK…CGGTGRKVKT (83 aa). Zn(2+) contacts are provided by Cys142, Cys145, Cys159, Cys162, Cys185, Cys188, Cys199, and Cys202. CXXCXGXG motif repeat units follow at residues 142-149, 159-166, 185-192, and 199-206; these read CDTCDGSG, CSTCGGRG, CPDCGGTG, and CSDCGGTG.

This sequence belongs to the DnaJ family. Homodimer. Zn(2+) serves as cofactor.

It is found in the cytoplasm. Its function is as follows. Participates actively in the response to hyperosmotic and heat shock by preventing the aggregation of stress-denatured proteins and by disaggregating proteins, also in an autonomous, DnaK-independent fashion. Unfolded proteins bind initially to DnaJ; upon interaction with the DnaJ-bound protein, DnaK hydrolyzes its bound ATP, resulting in the formation of a stable complex. GrpE releases ADP from DnaK; ATP binding to DnaK triggers the release of the substrate protein, thus completing the reaction cycle. Several rounds of ATP-dependent interactions between DnaJ, DnaK and GrpE are required for fully efficient folding. Also involved, together with DnaK and GrpE, in the DNA replication of plasmids through activation of initiation proteins. This chain is Chaperone protein DnaJ, found in Macrococcus caseolyticus (strain JCSC5402) (Macrococcoides caseolyticum).